A 621-amino-acid polypeptide reads, in one-letter code: pH-response transcription factor pacc-1 (621 aa).

The span at 1–14 shows a compositional bias: polar residues; it reads MSSTPAQENGTVNG. Positions 1 to 87 are disordered; that stretch reads MSSTPAQENG…PTTASNSSAP (87 aa). A compositionally biased stretch (low complexity) spans 15–87; the sequence is ANAAPAPAPA…PTTASNSSAP (73 aa). C2H2-type zinc fingers lie at residues 95-120, 131-155, and 161-183; these read LVCR…CEKH, LTCQ…VRVH, and HKCD…VKTH. Disordered regions lie at residues 395–539 and 566–621; these read PTYA…PETY and DEDD…PRIN. Composition is skewed to low complexity over residues 409 to 423 and 436 to 465; these read ASLA…PHSA and SYTS…VSYP. The YPX[LI] motif 1 signature appears at 464–467; that stretch reads YPTL. Positions 476–486 are enriched in polar residues; it reads PSTSGLGSNFT. Residues 502–511 show a composition bias toward basic and acidic residues; sequence RAADEADRAP. Residues 515 to 525 are compositionally biased toward polar residues; the sequence is ASEQATVSSPS. A compositionally biased stretch (low complexity) spans 583–595; sequence RNQQQRNQQQQQQ. The YPX[LI] motif 2 signature appears at 614-617; it reads YPVL.

This sequence belongs to the pacC/RIM101 family. Binds to DNA. Interacts with palA/prr-1, which binds to the two YPX[LI] motifs and is required for proteolytic processing. Post-translationally, activated by C-terminal proteolytic cleavage by signaling protease (probably palB/RIM13) at neutral to alkaline ambient pH.

The protein resides in the cytoplasm. Its subcellular location is the nucleus. Its function is as follows. Transcription factor that mediates regulation of both acid- and alkaline-expressed genes in response to ambient pH. At alkaline ambient pH, activates transcription of alkaline-expressed genes (including pacc-1 itself) and represses transcription of acid-expressed genes. This Neurospora crassa (strain ATCC 24698 / 74-OR23-1A / CBS 708.71 / DSM 1257 / FGSC 987) protein is pH-response transcription factor pacc-1 (pacc-1).